The chain runs to 260 residues: Snake venom serine protease homolog (260 aa).

The first 18 residues, 1-18 (MVLVRVLANLLMLQLSYA), serve as a signal peptide directing secretion. Positions 19–24 (QKSSEL) are excised as a propeptide. The Peptidase S1 domain maps to 25 to 251 (IIGGDECNIN…HLNWIQSIIA (227 aa)). 6 cysteine pairs are disulfide-bonded: C31/C165, C52/C68, C100/C258, C144/C212, C176/C191, and C202/C227. 2 N-linked (GlcNAc...) asparagine glycosylation sites follow: N123 and N124. N-linked (GlcNAc...) asparagine glycosylation is present at N253.

The protein belongs to the peptidase S1 family. Snake venom subfamily. Expressed by the venom gland.

Its subcellular location is the secreted. Snake venom serine protease homolog that may act in the hemostasis system of the prey. The polypeptide is Snake venom serine protease homolog (Protobothrops jerdonii (Jerdon's pitviper)).